Consider the following 440-residue polypeptide: Zinc finger MYND domain-containing protein 10 (440 aa).

Positions 394, 397, 405, 408, 414, 418, 426, and 430 each coordinate Zn(2+). The MYND-type zinc finger occupies 394–430 (CGYCNAEASKRCSRCQNVWYCCRECQVKHWEKHGKTC).

Belongs to the ZMYND10 family. In terms of assembly, interacts (via C-terminus) with DNAAF11 (via CS domain); this interaction stabilizes DNAAF11 at the protein level. Interacts (via C-terminus) with DNAL1; this interaction stabilizes DNAL1 at the protein level. Interacts with DNAAF4, HSPA8, IQUB, RUVBL2 and DYNTL5. Expressed in the testis. Expressed in the tracheal epithelium. Restricted to regions containing motile cilia.

It localises to the cytoplasm. It is found in the cytoskeleton. Its subcellular location is the microtubule organizing center. The protein localises to the centrosome. The protein resides in the centriolar satellite. It localises to the apical cell membrane. It is found in the dynein axonemal particle. In terms of biological role, plays a role in axonemal structure organization and motility. Involved in axonemal pre-assembly of inner and outer dynein arms (IDA and ODA, respectively) for proper axoneme building for cilia motility. May act by indirectly regulating transcription of dynein proteins. This Mus musculus (Mouse) protein is Zinc finger MYND domain-containing protein 10 (Zmynd10).